The chain runs to 842 residues: G-type lectin S-receptor-like serine/threonine-protein kinase At1g11330 (842 aa).

Residues 1–29 (MVVSVTIRRRFVLLLLACTCLLSRRLCFG) form the signal peptide. Over 30-444 (EDRITFSSPI…AHSELKTHSN (415 aa)) the chain is Extracellular. The 126-residue stretch at 32–157 (RITFSSPIKD…RNNGEILWES (126 aa)) folds into the Bulb-type lectin domain. N-linked (GlcNAc...) asparagine glycosylation is found at asparagine 63, asparagine 94, asparagine 122, asparagine 130, asparagine 196, and asparagine 260. The 37-residue stretch at 294 to 330 (PYTDCDAYGRCGRFGSCHAGENPPCKCVKGFVPKNNT) folds into the EGF-like; atypical domain. Intrachain disulfides connect cysteine 298/cysteine 310 and cysteine 304/cysteine 318. N-linked (GlcNAc...) asparagine glycosylation is found at asparagine 328, asparagine 336, asparagine 354, and asparagine 396. Positions 349 to 435 (CERQRNVSNG…SGIDLFIRVA (87 aa)) constitute a PAN domain. 2 disulfide bridges follow: cysteine 389/cysteine 410 and cysteine 393/cysteine 399. Residues 445 to 465 (LAVMIAAPVIGVMLIAAVCVL) form a helical membrane-spanning segment. The Cytoplasmic segment spans residues 466–842 (LACRKYKKRP…DVSLTAVTGR (377 aa)). The 287-residue stretch at 524-810 (FSLRNKLGQG…SLADPKQPAF (287 aa)) folds into the Protein kinase domain. ATP is bound by residues 530–538 (LGQGGFGPV) and lysine 552. Serine 558 and serine 573 each carry phosphoserine. The segment at 613–630 (MKQKILDWKTRFNIMEGI) is caM-binding. Aspartate 649 (proton acceptor) is an active-site residue. Serine 653 and serine 666 each carry phosphoserine. Phosphothreonine is present on threonine 683. Residues serine 726, serine 727, serine 821, and serine 830 each carry the phosphoserine modification. Positions 814 to 842 (RGASEAESSDQSSQKVSINDVSLTAVTGR) are disordered. The segment covering 818–827 (EAESSDQSSQ) has biased composition (low complexity). Positions 828 to 842 (KVSINDVSLTAVTGR) are enriched in polar residues. Threonine 837 carries the phosphothreonine modification.

This sequence belongs to the protein kinase superfamily. Ser/Thr protein kinase family.

It localises to the cell membrane. The enzyme catalyses L-seryl-[protein] + ATP = O-phospho-L-seryl-[protein] + ADP + H(+). It carries out the reaction L-threonyl-[protein] + ATP = O-phospho-L-threonyl-[protein] + ADP + H(+). This is G-type lectin S-receptor-like serine/threonine-protein kinase At1g11330 from Arabidopsis thaliana (Mouse-ear cress).